We begin with the raw amino-acid sequence, 264 residues long: Phosphonoacetaldehyde hydrolase (264 aa).

The active-site Nucleophile is D9. D9 and A11 together coordinate Mg(2+). The active-site Schiff-base intermediate with substrate is K50. A Mg(2+)-binding site is contributed by D183.

This sequence belongs to the HAD-like hydrolase superfamily. PhnX family. Homodimer. The cofactor is Mg(2+).

The enzyme catalyses phosphonoacetaldehyde + H2O = acetaldehyde + phosphate + H(+). Functionally, involved in phosphonate degradation. The sequence is that of Phosphonoacetaldehyde hydrolase from Bacillus cereus (strain AH187).